Consider the following 480-residue polypeptide: Cysteine--tRNA ligase (480 aa).

Zn(2+) is bound at residue C27. Positions 29-39 (PTVYNYAHIGN) match the 'HIGH' region motif. Residues C221, H246, and E250 each contribute to the Zn(2+) site. The short motif at 278-282 (KMSKS) is the 'KMSKS' region element. Position 281 (K281) interacts with ATP.

Belongs to the class-I aminoacyl-tRNA synthetase family. As to quaternary structure, monomer. Requires Zn(2+) as cofactor.

Its subcellular location is the cytoplasm. It carries out the reaction tRNA(Cys) + L-cysteine + ATP = L-cysteinyl-tRNA(Cys) + AMP + diphosphate. This Borreliella burgdorferi (strain ZS7) (Borrelia burgdorferi) protein is Cysteine--tRNA ligase.